Reading from the N-terminus, the 400-residue chain is Nicotinate phosphoribosyltransferase (400 aa).

At H220 the chain carries Phosphohistidine; by autocatalysis.

This sequence belongs to the NAPRTase family. In terms of processing, transiently phosphorylated on a His residue during the reaction cycle. Phosphorylation strongly increases the affinity for substrates and increases the rate of nicotinate D-ribonucleotide production. Dephosphorylation regenerates the low-affinity form of the enzyme, leading to product release.

It catalyses the reaction nicotinate + 5-phospho-alpha-D-ribose 1-diphosphate + ATP + H2O = nicotinate beta-D-ribonucleotide + ADP + phosphate + diphosphate. It participates in cofactor biosynthesis; NAD(+) biosynthesis; nicotinate D-ribonucleotide from nicotinate: step 1/1. In terms of biological role, catalyzes the synthesis of beta-nicotinate D-ribonucleotide from nicotinate and 5-phospho-D-ribose 1-phosphate at the expense of ATP. This chain is Nicotinate phosphoribosyltransferase, found in Salmonella typhi.